A 401-amino-acid chain; its full sequence is Phosphoglycerate kinase (401 aa).

Residues 21-23 (DFN), arginine 36, 59-62 (HLGR), arginine 119, and arginine 160 each bind substrate. Residues lysine 212, glutamate 330, and 357–360 (GGDS) each bind ATP.

It belongs to the phosphoglycerate kinase family. Monomer.

Its subcellular location is the cytoplasm. The catalysed reaction is (2R)-3-phosphoglycerate + ATP = (2R)-3-phospho-glyceroyl phosphate + ADP. Its pathway is carbohydrate degradation; glycolysis; pyruvate from D-glyceraldehyde 3-phosphate: step 2/5. In Limosilactobacillus reuteri subsp. reuteri (strain JCM 1112) (Lactobacillus reuteri), this protein is Phosphoglycerate kinase.